The chain runs to 155 residues: SsrA-binding protein (155 aa).

Over residues 132-147 (KRESIKRREQDRDIKR) the composition is skewed to basic and acidic residues. The tract at residues 132 to 155 (KRESIKRREQDRDIKRQMKQFNGR) is disordered.

This sequence belongs to the SmpB family.

It is found in the cytoplasm. Required for rescue of stalled ribosomes mediated by trans-translation. Binds to transfer-messenger RNA (tmRNA), required for stable association of tmRNA with ribosomes. tmRNA and SmpB together mimic tRNA shape, replacing the anticodon stem-loop with SmpB. tmRNA is encoded by the ssrA gene; the 2 termini fold to resemble tRNA(Ala) and it encodes a 'tag peptide', a short internal open reading frame. During trans-translation Ala-aminoacylated tmRNA acts like a tRNA, entering the A-site of stalled ribosomes, displacing the stalled mRNA. The ribosome then switches to translate the ORF on the tmRNA; the nascent peptide is terminated with the 'tag peptide' encoded by the tmRNA and targeted for degradation. The ribosome is freed to recommence translation, which seems to be the essential function of trans-translation. The protein is SsrA-binding protein of Streptococcus mutans serotype c (strain ATCC 700610 / UA159).